A 142-amino-acid chain; its full sequence is DNA-directed RNA polymerase subunit omega (142 aa).

The tract at residues 93 to 142 (AWSVPEAGGDEGGDASELLDDEGEGAAAGAEPDFSEMDVPLADLADEDKI) is disordered. Over residues 100 to 116 (GGDEGGDASELLDDEGE) the composition is skewed to acidic residues.

The protein belongs to the RNA polymerase subunit omega family. The RNAP catalytic core consists of 2 alpha, 1 beta, 1 beta' and 1 omega subunit. When a sigma factor is associated with the core the holoenzyme is formed, which can initiate transcription.

It carries out the reaction RNA(n) + a ribonucleoside 5'-triphosphate = RNA(n+1) + diphosphate. In terms of biological role, promotes RNA polymerase assembly. Latches the N- and C-terminal regions of the beta' subunit thereby facilitating its interaction with the beta and alpha subunits. The polypeptide is DNA-directed RNA polymerase subunit omega (Rhodospirillum centenum (strain ATCC 51521 / SW)).